The sequence spans 145 residues: Class I hydrophobin rodE (145 aa).

Cystine bridges form between Cys43/Cys126, Cys59/Cys120, Cys60/Cys95, and Cys127/Cys140.

This sequence belongs to the fungal hydrophobin family. Self-assembles to form functional amyloid fibrils called rodlets. Self-assembly into fibrillar rodlets occurs spontaneously at hydrophobic:hydrophilic interfaces and the rodlets further associate laterally to form amphipathic monolayers.

In terms of biological role, aerial growth, conidiation, and dispersal of filamentous fungi in the environment rely upon a capability of their secreting small amphipathic proteins called hydrophobins (HPBs) with low sequence identity. Class I can self-assemble into an outermost layer of rodlet bundles on aerial cell surfaces, conferring cellular hydrophobicity that supports fungal growth, development and dispersal; whereas Class II form highly ordered films at water-air interfaces through intermolecular interactions but contribute nothing to the rodlet structure. RodE is a class I hydrophobin that, unlike rodA, is not required for rodlet formation. In Aspergillus fumigatus (strain ATCC MYA-4609 / CBS 101355 / FGSC A1100 / Af293) (Neosartorya fumigata), this protein is Class I hydrophobin rodE.